A 299-amino-acid chain; its full sequence is uncharacterized protein (299 aa).

The helical transmembrane segment at 25–45 (LLYFFKSLAMILFFIFFSLTS) threads the bilayer.

The protein resides in the membrane. This is an uncharacterized protein from Rickettsia prowazekii (strain Madrid E).